Here is a 593-residue protein sequence, read N- to C-terminus: F-box/LRR-repeat protein 17 (593 aa).

Residues 120-177 (DLDLQLDTDIVQPGRFHAVGLWEVLKRLPPSSLLMAARVCKGWRETSRKMWKAAEELR) form the F-box domain. 9 LRR repeats span residues 178-206 (IRVPERAQIGYIGSLLQKCPRLIRLSLKI), 207-232 (ESDFDATTLACIAFSCPNLEVLEITT), 237-262 (VNRISGDELSRFVANKRGLTSLKMEG), 276-304 (LSTLWLSDLHSLSKMIFNCPNLTEISLEF), 335-361 (SLKLSHTVVLSLTAVNFRYLRMLSLVL), 362-387 (GINITDASVAAISSGYKNLELLDLSG), 414-439 (CPNITSSGIQFATAQLPLLELMDCGM), 477-502 (LSLWGCSSLDALFLNCPELMDLNLNL), and 503-525 (CSNLHPESLVLQCPKLQLVYASG).

As to quaternary structure, part of a SCF (ASK-cullin-F-box) protein ligase complex. Interacts with SKP1A/ASK1, KRP4, KRP6 and KRP7. Expressed in developing pollen.

The protein localises to the nucleus. The protein operates within protein modification; protein ubiquitination. Functionally, essential protein for male fertility. Component of the SCF(ASK-cullin-F-box) E3 ubiquitin ligase complex SCF(FBL17), which mediates the ubiquitination and subsequent proteasomal degradation of target proteins. Enables the switch in cell cycle control leading to male germ cell lineage formation from microspores after meiosis. Targets CDKA-1 inhibitors the degradation specifically in male germ cells (e.g. KRP6 and KRP7) and thus enables CDKA-1 activation and germ cell S-phase progression. Promotes twin sperm cell production and double fertilization. The sequence is that of F-box/LRR-repeat protein 17 (FBL17) from Arabidopsis thaliana (Mouse-ear cress).